The sequence spans 105 residues: Thioredoxin (105 aa).

The Thioredoxin domain occupies 2-105 (VKQIESKSAF…KLEATINELL (104 aa)). N6-acetyllysine is present on Lys-3. N6-succinyllysine is present on Lys-8. Catalysis depends on nucleophile residues Cys-32 and Cys-35. Cys-32 and Cys-35 are oxidised to a cystine. At Lys-39 the chain carries N6-acetyllysine. Cys-62 and Cys-69 each carry S-nitrosocysteine. At Cys-73 the chain carries S-nitrosocysteine; alternate. An N6-acetyllysine; alternate modification is found at Lys-94. Position 94 is an N6-succinyllysine; alternate (Lys-94).

It belongs to the thioredoxin family. In terms of assembly, homodimer; disulfide-linked. Interacts with TXNIP through the redox-active site. Interacts with MAP3K5 and CASP3. Interacts with APEX1; the interaction stimulates the FOS/JUN AP-1 DNA-binding activity in a redox-dependent manner. In the fully reduced protein, both Cys-69 and Cys-73 are nitrosylated in response to nitric oxide (NO). When two disulfide bonds are present in the protein, only Cys-73 is nitrosylated. Cys-73 can serve as donor for nitrosylation of target proteins.

Its subcellular location is the nucleus. It is found in the cytoplasm. It localises to the secreted. Its function is as follows. Participates in various redox reactions through the reversible oxidation of its active center dithiol to a disulfide and catalyzes dithiol-disulfide exchange reactions. Plays a role in the reversible S-nitrosylation of cysteine residues in target proteins, and thereby contributes to the response to intracellular nitric oxide. Nitrosylates the active site Cys of CASP3 in response to nitric oxide (NO), and thereby inhibits caspase-3 activity. Induces the FOS/JUN AP-1 DNA binding activity in ionizing radiation (IR) cells through its oxidation/reduction status and stimulates AP-1 transcriptional activity. In Oryctolagus cuniculus (Rabbit), this protein is Thioredoxin (TXN).